A 600-amino-acid chain; its full sequence is Aspartate--tRNA(Asp/Asn) ligase (600 aa).

Glu-174 is an L-aspartate binding site. The interval 198-201 is aspartate; it reads QLFK. Arg-220 provides a ligand contact to L-aspartate. Residues 220–222 and Gln-229 contribute to the ATP site; that span reads RDE. Residue His-457 participates in L-aspartate binding. Position 491 (Glu-491) interacts with ATP. Residue Arg-498 participates in L-aspartate binding. An ATP-binding site is contributed by 543–546; it reads GLDR.

It belongs to the class-II aminoacyl-tRNA synthetase family. Type 1 subfamily. In terms of assembly, homodimer.

The protein resides in the cytoplasm. It carries out the reaction tRNA(Asx) + L-aspartate + ATP = L-aspartyl-tRNA(Asx) + AMP + diphosphate. Aspartyl-tRNA synthetase with relaxed tRNA specificity since it is able to aspartylate not only its cognate tRNA(Asp) but also tRNA(Asn). Reaction proceeds in two steps: L-aspartate is first activated by ATP to form Asp-AMP and then transferred to the acceptor end of tRNA(Asp/Asn). The sequence is that of Aspartate--tRNA(Asp/Asn) ligase from Burkholderia mallei (strain NCTC 10247).